Reading from the N-terminus, the 457-residue chain is Glucuronide carrier protein homolog (457 aa).

Topologically, residues 1 to 11 (MNQQLSWRTIV) are cytoplasmic. A helical membrane pass occupies residues 12 to 34 (GYSLGDVANNFAFAMGALFLLSY). Residues 35-37 (YTD) are Periplasmic-facing. Residues 38 to 60 (VAGVGAAAAGTMLLLVRVFDAFA) form a helical membrane-spanning segment. Over 61-79 (DVFAGRVVDSVNTRWGKFR) the chain is Cytoplasmic. A helical transmembrane segment spans residues 80 to 100 (PFLLFGTAPLMIFSVLVFWVL). Over 101–108 (TDWSHGSK) the chain is Periplasmic. The chain crosses the membrane as a helical span at residues 109–129 (VVYAYLTYMGLGLCYSLVNIP). Residues 130–146 (YGSLATAMTQQPQSRAR) lie on the Cytoplasmic side of the membrane. A helical transmembrane segment spans residues 147–167 (LGAARGIAASLTFVCLAFLIG). Residues 168-180 (PSIKNSSPEEMVS) are Periplasmic-facing. A helical transmembrane segment spans residues 181 to 201 (VYHFWTIVLAIAGMVLYFICF). The Cytoplasmic segment spans residues 202 to 228 (KSTRENVVRIVAQPSLNISLQTLKRNR). Residues 229–249 (PLFMLCIGALCVLISTFAVSA) form a helical membrane-spanning segment. Over 250-263 (SSLFYVRYVLNDTG) the chain is Periplasmic. A helical membrane pass occupies residues 264–284 (LFTVLVLVQNLVGTVASAPLV). Residues 285 to 296 (PGMVARIGKKNT) are Cytoplasmic-facing. A helical transmembrane segment spans residues 297–316 (FLIGALLGTCGYLLFFWVSV). Over 317–320 (WSLP) the chain is Periplasmic. Residues 321–343 (VALVALAIASIGQGVTMTVMWAL) form a helical membrane-spanning segment. The Cytoplasmic segment spans residues 344 to 372 (EADTVEYGEYLTGVRIEGLTYSLFSFTRK). A helical transmembrane segment spans residues 373-393 (CGQAIGGSIPAFILGLSGYIA). The Periplasmic portion of the chain corresponds to 394 to 408 (NQVQTPEVIMGIRTS). The chain crosses the membrane as a helical span at residues 409–429 (IALVPCGFMLLAFVIIWFYPL). Residues 430–457 (TDKKFKEIVVEIDNRKKVQQQLISDITN) are Cytoplasmic-facing.

The protein belongs to the sodium:galactoside symporter (TC 2.A.2) family.

It is found in the cell inner membrane. This is Glucuronide carrier protein homolog (uidB) from Escherichia coli (strain K12).